Here is a 180-residue protein sequence, read N- to C-terminus: Inner membrane-spanning protein YciB (180 aa).

6 consecutive transmembrane segments (helical) span residues 4–24, 25–45, 49–69, 76–96, 118–138, and 150–170; these read LLSE…GGGI, QSAT…CYII, VSKL…ITLI, IKIK…MSGI, IILS…NEVV, and FKVF…LPLL.

This sequence belongs to the YciB family.

It localises to the cell inner membrane. Plays a role in cell envelope biogenesis, maintenance of cell envelope integrity and membrane homeostasis. The polypeptide is Inner membrane-spanning protein YciB (Rickettsia typhi (strain ATCC VR-144 / Wilmington)).